We begin with the raw amino-acid sequence, 139 residues long: Transcription initiation factor IIA small chain homolog (139 aa).

The tract at residues 113–139 (LSAQGPSKRVNRAHAAAAGDDEDDDSD) is disordered.

Belongs to the TFIIA subunit 2 family.

The protein resides in the nucleus. This chain is Transcription initiation factor IIA small chain homolog, found in Caenorhabditis elegans.